The primary structure comprises 1021 residues: Replication factor C subunit 1 (1021 aa).

Disordered regions lie at residues 1-259 (MSSD…EGAP) and 339-392 (PAKA…GSAS). Residues 90 to 110 (KVSDELEDDMKPLPAKEVHKE) show a composition bias toward basic and acidic residues. The span at 123–138 (SKRKTPVKPPPSKKLK) shows a compositional bias: basic residues. The segment covering 197–207 (LDDDGEEDKMD) has biased composition (acidic residues). Residues 219 to 236 (RGRGGASGGRGRGGGGRG) show a composition bias toward gly residues. 2 stretches are compositionally biased toward basic and acidic residues: residues 241-255 (GERK…KEVP) and 347-357 (HQSDKNSEKQQ). The BRCT domain occupies 257-347 (GAPDCLTGLT…KPAKATVAKH (91 aa)). Polar residues predominate over residues 374–392 (NQITTGKNISPKSNKGSAS). Position 465–472 (465–472 (SGPPGIGK)) interacts with ATP. Residues 931-1021 (VGESLPEENG…AGGSGGKRKR (91 aa)) form a disordered region. The span at 945-958 (EGDEEDSSDAENND) shows a compositional bias: acidic residues. Residues 965 to 977 (TKPKLDLQSDKKK) are compositionally biased toward basic and acidic residues. Low complexity predominate over residues 999 to 1010 (AGRSKASGSAGK). Over residues 1011–1021 (AAGGSGGKRKR) the composition is skewed to gly residues.

Belongs to the activator 1 large subunit family. Heterotetramer of subunits RFC2, RFC3, RFC4 and RFC5 that can form a complex with RFC1. As to expression, expressed in roots, leaves, shoot apical meristem (SAM), flag leaves and panicles.

It localises to the nucleus. In terms of biological role, may be involved in DNA replication and thus regulate cell proliferation. The sequence is that of Replication factor C subunit 1 (RFC1) from Oryza sativa subsp. japonica (Rice).